Consider the following 364-residue polypeptide: Zinc finger protein 474 (364 aa).

Positions 1-10 (MERGKKKRIS) are enriched in basic residues. Disordered stretches follow at residues 1–21 (MERG…HHSK) and 37–60 (SYSS…DTQK). The C2HC/C3H-type 1 zinc-finger motif lies at 93–122 (GFRVCYICGREFGSQSIAIHEPQCLQKWHI). Residues Cys-97, Cys-100, His-112, and Cys-116 each contribute to the Zn(2+) site. Residues 127–147 (LPKHLRRPEPSKPQSLSSSGS) are disordered. A compositionally biased stretch (low complexity) spans 138–147 (KPQSLSSSGS). 3 C2HC/C3H-type zinc fingers span residues 164 to 193 (QLLP…KGEG), 220 to 249 (RTVI…KWKM), and 283 to 312 (QLVF…HPYG). The Zn(2+) site is built by Cys-168, Cys-171, His-183, Cys-187, Cys-224, Cys-227, His-239, Cys-243, Cys-287, Cys-290, His-302, and Cys-306. The tract at residues 187-214 (CKPKGEGPRAPHSNSSDHLTGLKKACSG) is disordered.

Zn(2+) serves as cofactor.

This chain is Zinc finger protein 474 (ZNF474), found in Homo sapiens (Human).